Consider the following 397-residue polypeptide: Transcription factor GATA-5 (397 aa).

The tract at residues 48–116 (GCEPSPQPPE…SAGGRDGSAY (69 aa)) is disordered. Over residues 87–101 (PPGATAFPFAHSPSG) the composition is skewed to low complexity. Over residues 102–112 (PGSGGSAGGRD) the composition is skewed to gly residues. GATA-type zinc fingers lie at residues 189-213 (CVNC…CNAC) and 243-267 (CTNC…CNAC). A disordered region spans residues 281–356 (AMKKESIQTR…ASGQEDDSLA (76 aa)). Basic residues predominate over residues 289–298 (TRKRKPKTIA). Positions 310 to 335 (ASASPSAVASTDSSAATSKAKPSLAS) are enriched in low complexity.

Its subcellular location is the nucleus. Its function is as follows. Transcription factor required during cardiovascular development. Plays an important role in the transcriptional program(s) that underlies smooth muscle cell diversity. Binds to the functionally important CEF-1 nuclear protein binding site in the cardiac-specific slow/cardiac troponin C transcriptional enhancer. The protein is Transcription factor GATA-5 of Homo sapiens (Human).